The chain runs to 249 residues: 5'-nucleotidase SurE (249 aa).

A divalent metal cation-binding residues include Asp8, Asp9, Ser39, and Asn91.

It belongs to the SurE nucleotidase family. A divalent metal cation is required as a cofactor.

The protein localises to the cytoplasm. The catalysed reaction is a ribonucleoside 5'-phosphate + H2O = a ribonucleoside + phosphate. Its function is as follows. Nucleotidase that shows phosphatase activity on nucleoside 5'-monophosphates. The protein is 5'-nucleotidase SurE of Haemophilus influenzae (strain 86-028NP).